An 85-amino-acid chain; its full sequence is Anti-neuroexcitation peptide 2 (85 aa).

The N-terminal stretch at 1–21 (MKLSLLLVISASMLIDGLVNA) is a signal peptide. Residues 22–82 (DGYIRGSNGC…TWKSESNTCG (61 aa)) enclose the LCN-type CS-alpha/beta domain. 4 disulfides stabilise this stretch: Cys-31/Cys-81, Cys-35/Cys-56, Cys-42/Cys-63, and Cys-46/Cys-65.

The protein belongs to the long (4 C-C) scorpion toxin superfamily. Sodium channel inhibitor family. Beta subfamily. In terms of tissue distribution, expressed by the venom gland.

Its subcellular location is the secreted. In terms of biological role, binds to sodium channels (Nav) and inhibits them. Recombinant ANEP delays the convulsion seizure of insect models by 18% and shows anti-neuroexcitatory activity. This Olivierus martensii (Manchurian scorpion) protein is Anti-neuroexcitation peptide 2.